A 198-amino-acid polypeptide reads, in one-letter code: Large ribosomal subunit protein bL27c (198 aa).

Residues 1–58 constitute a chloroplast transit peptide; the sequence is MAMATSMSLNLIGAFKGLSLSSTSSFLRGDLSFSPKTSFTVTLPLENLQAPIPLTIES.

The protein belongs to the bacterial ribosomal protein bL27 family. In terms of assembly, part of the 50S ribosomal subunit.

The protein resides in the plastid. The protein localises to the chloroplast. The sequence is that of Large ribosomal subunit protein bL27c (RPL27) from Arabidopsis thaliana (Mouse-ear cress).